The chain runs to 374 residues: Growth/differentiation factor 8 (374 aa).

A signal peptide spans 1–22 (MHFTQVLISLSVLIACGPVGYG). Residues 23-265 (DITAHQQPST…ISEGPKRIRR (243 aa)) constitute a propeptide that is removed on maturation. N-linked (GlcNAc...) asparagine glycans are attached at residues Asn72 and Asn274. Intrachain disulfides connect Cys271–Cys281, Cys280–Cys339, Cys308–Cys371, and Cys312–Cys373.

This sequence belongs to the TGF-beta family. As to quaternary structure, homodimer; disulfide-linked. In terms of tissue distribution, predominantly expressed in muscle. At hatching, expression is strongest in the skin epithelium, and is also found in the retina and brain. From day 28, expressed in skeletal muscle. In the adult, highest expression is seen in the gastrointestinal tract, brain, muscle, heart and testis. Also expressed in the adult pharynx, kidney, spleen, liver, gill, eyes, skin, swim bladder and ovary.

The protein resides in the secreted. Functionally, acts specifically as a negative regulator of skeletal muscle growth. May down-regulate muscle-specific transcription factors such as myod and myog. The sequence is that of Growth/differentiation factor 8 (mstnb) from Danio rerio (Zebrafish).